A 513-amino-acid chain; its full sequence is Bifunctional purine biosynthesis protein PurH (513 aa).

Residues 1–145 (MNKRAIISVY…KNFKYTTVIV (145 aa)) enclose the MGS-like domain.

Belongs to the PurH family.

It carries out the reaction (6R)-10-formyltetrahydrofolate + 5-amino-1-(5-phospho-beta-D-ribosyl)imidazole-4-carboxamide = 5-formamido-1-(5-phospho-D-ribosyl)imidazole-4-carboxamide + (6S)-5,6,7,8-tetrahydrofolate. It catalyses the reaction IMP + H2O = 5-formamido-1-(5-phospho-D-ribosyl)imidazole-4-carboxamide. It participates in purine metabolism; IMP biosynthesis via de novo pathway; 5-formamido-1-(5-phospho-D-ribosyl)imidazole-4-carboxamide from 5-amino-1-(5-phospho-D-ribosyl)imidazole-4-carboxamide (10-formyl THF route): step 1/1. The protein operates within purine metabolism; IMP biosynthesis via de novo pathway; IMP from 5-formamido-1-(5-phospho-D-ribosyl)imidazole-4-carboxamide: step 1/1. The polypeptide is Bifunctional purine biosynthesis protein PurH (Caldicellulosiruptor bescii (strain ATCC BAA-1888 / DSM 6725 / KCTC 15123 / Z-1320) (Anaerocellum thermophilum)).